The primary structure comprises 288 residues: Oxaloacetate decarboxylase (288 aa).

Serine 47 contributes to the substrate binding site. Aspartate 85 provides a ligand contact to Mg(2+). Substrate-binding residues include arginine 156 and histidine 232.

Belongs to the isocitrate lyase/PEP mutase superfamily. Oxaloacetate decarboxylase family. As to quaternary structure, homotetramer; dimer of dimers. Mg(2+) is required as a cofactor.

It catalyses the reaction oxaloacetate + H(+) = pyruvate + CO2. Catalyzes the decarboxylation of oxaloacetate into pyruvate. Seems to play a role in maintaining cellular concentrations of bicarbonate and pyruvate. The sequence is that of Oxaloacetate decarboxylase from Bradyrhizobium sp. (strain ORS 278).